A 398-amino-acid polypeptide reads, in one-letter code: Beta-1,4-galactosyltransferase 1 (398 aa).

Residues 1-24 are Cytoplasmic-facing; it reads MRLREPLLSGSAAMPGASLQRACR. Residues 25–44 form a helical; Signal-anchor for type II membrane protein membrane-spanning segment; it reads LLVAVCALHLGVTLVYYLAG. Over 45–398 the chain is Lumenal; sequence RDLSRLPQLV…QITVDIGTPS (354 aa). Positions 61–76 are enriched in polar residues; the sequence is QGGSNSAAAIGQSSGE. A disordered region spans residues 61 to 117; sequence QGGSNSAAAIGQSSGELRTGGARPPPPLGASSQPRPGGDSSPVVDSGPGPASNLTSV. A glycan (N-linked (GlcNAc...) asparagine) is linked at N113. The cysteines at positions 130 and 172 are disulfide-linked. UDP-alpha-D-galactose contacts are provided by residues 183–187, 222–224, 249–250, and W310; these read PFRNR, FNR, and VD. Cysteines 243 and 262 form a disulfide. D250 contacts Mn(2+). 312–315 contacts N-acetyl-D-glucosamine; that stretch reads GEDD. H343 serves as a coordination point for Mn(2+). 343 to 346 is a binding site for UDP-alpha-D-galactose; that stretch reads HSRD. R355 is a binding site for N-acetyl-D-glucosamine.

This sequence belongs to the glycosyltransferase 7 family. Homodimer; and heterodimer with alpha-lactalbumin to form lactose synthase. Interacts (via N-terminal cytoplasmic domain) with UBE2Q1 (via N-terminus); the interaction is direct. It depends on Mn(2+) as a cofactor. The soluble form derives from the membrane forms by proteolytic processing. In terms of tissue distribution, ubiquitously expressed, but at very low levels in fetal and adult brain.

It localises to the golgi apparatus. The protein resides in the golgi stack membrane. Its subcellular location is the cell membrane. It is found in the cell surface. The protein localises to the cell projection. It localises to the filopodium. The protein resides in the secreted. It carries out the reaction D-glucose + UDP-alpha-D-galactose = lactose + UDP + H(+). The catalysed reaction is an N-acetyl-beta-D-glucosaminyl derivative + UDP-alpha-D-galactose = a beta-D-galactosyl-(1-&gt;4)-N-acetyl-beta-D-glucosaminyl derivative + UDP + H(+). It catalyses the reaction N-acetyl-D-glucosamine + UDP-alpha-D-galactose = beta-D-galactosyl-(1-&gt;4)-N-acetyl-D-glucosamine + UDP + H(+). The enzyme catalyses a beta-D-GlcNAc-(1-&gt;3)-beta-D-Gal-(1-&gt;4)-beta-D-Glc-(1&lt;-&gt;1)-Cer(d18:1(4E)) + UDP-alpha-D-galactose = a neolactoside nLc4Cer(d18:1(4E)) + UDP + H(+). It carries out the reaction a beta-D-glucosylceramide + UDP-alpha-D-galactose = a beta-D-galactosyl-(1-&gt;4)-beta-D-glucosyl-(1&lt;-&gt;1)-ceramide + UDP + H(+). The catalysed reaction is a neolactoside IV(3)-beta-GlcNAc-nLc4Cer + UDP-alpha-D-galactose = a neolactoside nLc6Cer + UDP + H(+). It functions in the pathway protein modification; protein glycosylation. The Golgi complex form catalyzes the production of lactose in the lactating mammary gland and could also be responsible for the synthesis of complex-type N-linked oligosaccharides in many glycoproteins as well as the carbohydrate moieties of glycolipids. Its function is as follows. The cell surface form functions as a recognition molecule during a variety of cell to cell and cell to matrix interactions, as those occurring during development and egg fertilization, by binding to specific oligosaccharide ligands on opposing cells or in the extracellular matrix. This is Beta-1,4-galactosyltransferase 1 from Homo sapiens (Human).